The chain runs to 473 residues: Vasculin (473 aa).

Disordered stretches follow at residues 1-26 (MAQH…SLNF), 44-163 (RRRH…EYPP), 196-240 (SQPV…SFPH), 258-286 (NFSP…QQPR), and 305-342 (LKRD…QERD). Phosphoserine is present on Ser-49. Arg-87 bears the Omega-N-methylarginine mark. A compositionally biased stretch (low complexity) spans 93–107 (GSSRSRSSIFHSGKS). Residues 119 to 133 (ETGRKDDKRERKQFE) show a composition bias toward basic and acidic residues. Ser-274, Ser-276, Ser-322, and Ser-381 each carry phosphoserine. The segment covering 305 to 329 (LKRDRVEEEHEDESHVGSEKDDDSF) has biased composition (basic and acidic residues). Positions 444 to 473 (GPWKNSTFKPTIENDDTETSSSDTSDDDDV) are disordered. Residues 456-473 (ENDDTETSSSDTSDDDDV) show a composition bias toward acidic residues.

This sequence belongs to the vasculin family. In terms of assembly, interacts with GTF2B, GTF2F2, RNA polymerase II and TBP.

It localises to the nucleus. Its function is as follows. Functions as a GC-rich promoter-specific transactivating transcription factor. This Bos taurus (Bovine) protein is Vasculin (GPBP1).